Consider the following 200-residue polypeptide: Molybdenum cofactor guanylyltransferase (200 aa).

GTP contacts are provided by residues 10-12 (LAG), lysine 23, asparagine 51, aspartate 69, and aspartate 99. Residue aspartate 99 coordinates Mg(2+).

Belongs to the MobA family. In terms of assembly, monomer. Requires Mg(2+) as cofactor.

The protein localises to the cytoplasm. The enzyme catalyses Mo-molybdopterin + GTP + H(+) = Mo-molybdopterin guanine dinucleotide + diphosphate. In terms of biological role, transfers a GMP moiety from GTP to Mo-molybdopterin (Mo-MPT) cofactor (Moco or molybdenum cofactor) to form Mo-molybdopterin guanine dinucleotide (Mo-MGD) cofactor. The chain is Molybdenum cofactor guanylyltransferase from Shewanella halifaxensis (strain HAW-EB4).